The sequence spans 340 residues: MEASALKAWELDNNVQLVDPKRDALYNFDADAQKAINKEQPWKQDPSHFKHVRISATALIKMTMHARSGGNLEVMGLMQGYTQGDTFIVTDAFRLPVEGTETRVNAQDEANEYIVEYLDLCRAQGRQENVVGWYHSHPGYGCWLSGIDVDTEAMQQQFQDPFLAVVIDPDRTINSGKVDIGAFRTYPADYKPSGGVTSDGFQAVPLAKAAEFGAHASRYYSLEVSHFKSSLDSHLLELLWHKYWVQTLSQNPLITNRDYGNKQLLDLSSKIKEATTGITRNRAGQGMMMGMSTKSSDKAVDKLAKEANLIASKERSGLIANQVKASLFNDLGSKANPTSE.

Residues 52-189 (VRISATALIK…IGAFRTYPAD (138 aa)) enclose the MPN domain. 3 residues coordinate Zn(2+): His135, His137, and Asp148. A JAMM motif motif is present at residues 135–148 (HSHPGYGCWLSGID).

The protein belongs to the peptidase M67A family. CSN5 subfamily. Component of the COP9 signalosome (CSN) complex.

The protein localises to the cytoplasm. It is found in the nucleus. In terms of biological role, catalytic Component of the COP9 signalosome (CSN) complex that acts as an regulator of the ubiquitin (Ubl) conjugation pathway by mediating the deneddylation of the cullin subunit of SCF-type E3 ubiquitin-protein ligase complexes. The polypeptide is COP9 signalosome complex subunit 5 (RRI1) (Gibberella zeae (strain ATCC MYA-4620 / CBS 123657 / FGSC 9075 / NRRL 31084 / PH-1) (Wheat head blight fungus)).